Here is a 27-residue protein sequence, read N- to C-terminus: KDGYLMEPNGCKLGCLTRPAKYCWXEE.

An LCN-type CS-alpha/beta domain is found at 1 to 27 (KDGYLMEPNGCKLGCLTRPAKYCWXEE).

It belongs to the long (4 C-C) scorpion toxin superfamily. Sodium channel inhibitor family. Beta subfamily. In terms of tissue distribution, expressed by the venom gland.

It is found in the secreted. Functionally, beta toxins bind voltage-independently at site-4 of sodium channels (Nav) and shift the voltage of activation toward more negative potentials thereby affecting sodium channel activation and promoting spontaneous and repetitive firing. This toxin is active against mammals and also affects neuromuscular preparations of frog. This is Toxin TdII-4 from Tityus discrepans (Venezuelan scorpion).